The primary structure comprises 468 residues: ATP synthase subunit beta (468 aa).

155–162 (GGAGVGKT) contacts ATP.

This sequence belongs to the ATPase alpha/beta chains family. As to quaternary structure, F-type ATPases have 2 components, CF(1) - the catalytic core - and CF(0) - the membrane proton channel. CF(1) has five subunits: alpha(3), beta(3), gamma(1), delta(1), epsilon(1). CF(0) has three main subunits: a(1), b(2) and c(9-12). The alpha and beta chains form an alternating ring which encloses part of the gamma chain. CF(1) is attached to CF(0) by a central stalk formed by the gamma and epsilon chains, while a peripheral stalk is formed by the delta and b chains.

It is found in the cell membrane. It carries out the reaction ATP + H2O + 4 H(+)(in) = ADP + phosphate + 5 H(+)(out). In terms of biological role, produces ATP from ADP in the presence of a proton gradient across the membrane. The catalytic sites are hosted primarily by the beta subunits. This chain is ATP synthase subunit beta, found in Streptococcus uberis (strain ATCC BAA-854 / 0140J).